The primary structure comprises 451 residues: Tubulin alpha chain (451 aa).

The MREC motif signature appears at 1–4 (MREC). Position 11 (glutamine 11) interacts with GTP. Lysine 40 bears the N6-acetyllysine mark. Residues glutamate 71, serine 140, glycine 144, threonine 145, threonine 179, asparagine 206, and asparagine 228 each contribute to the GTP site. Position 71 (glutamate 71) interacts with Mg(2+). Glutamate 254 is a catalytic residue. Residues 432–451 (YEEVGVDSVEGEGEEEGEEY) are disordered. Glutamate 445 carries the post-translational modification 5-glutamyl polyglutamate.

Belongs to the tubulin family. As to quaternary structure, dimer of alpha and beta chains. A typical microtubule is a hollow water-filled tube with an outer diameter of 25 nm and an inner diameter of 15 nM. Alpha-beta heterodimers associate head-to-tail to form protofilaments running lengthwise along the microtubule wall with the beta-tubulin subunit facing the microtubule plus end conferring a structural polarity. Microtubules usually have 13 protofilaments but different protofilament numbers can be found in some organisms and specialized cells. Requires Mg(2+) as cofactor. Some glutamate residues at the C-terminus are polyglycylated, resulting in polyglycine chains on the gamma-carboxyl group. Glycylation is mainly limited to tubulin incorporated into axonemes (cilia and flagella) whereas glutamylation is prevalent in neuronal cells, centrioles, axonemes, and the mitotic spindle. Both modifications can coexist on the same protein on adjacent residues, and lowering polyglycylation levels increases polyglutamylation, and reciprocally. The precise function of polyglycylation is still unclear. In terms of processing, some glutamate residues at the C-terminus are polyglutamylated, resulting in polyglutamate chains on the gamma-carboxyl group. Polyglutamylation plays a key role in microtubule severing by spastin (SPAST). SPAST preferentially recognizes and acts on microtubules decorated with short polyglutamate tails: severing activity by SPAST increases as the number of glutamates per tubulin rises from one to eight, but decreases beyond this glutamylation threshold. Post-translationally, acetylation of alpha chains at Lys-40 is located inside the microtubule lumen. This modification has been correlated with increased microtubule stability, intracellular transport and ciliary assembly. Undergoes a tyrosination/detyrosination cycle, the cyclic removal and re-addition of a C-terminal tyrosine residue by the enzymes tubulin tyrosine carboxypeptidase (MATCAP, VASH1 or VASH2) and tubulin tyrosine ligase (TTL), respectively. In terms of processing, tyrosination promotes microtubule interaction with CAP-Gly microtubule plus-end tracking proteins. Tyrosinated tubulins regulate the initiation of dynein-driven motility. Post-translationally, detyrosination is involved in metaphase plate congression by guiding chromosomes during mitosis. Detyrosination increases microtubules-dependent mechanotransduction in dystrophic cardiac and skeletal muscle. In cardiomyocytes, detyrosinated microtubules are required to resist to contractile compression during contraction.

The protein localises to the cytoplasm. It is found in the cytoskeleton. It carries out the reaction GTP + H2O = GDP + phosphate + H(+). Its function is as follows. Tubulin is the major constituent of microtubules, a cylinder consisting of laterally associated linear protofilaments composed of alpha- and beta-tubulin heterodimers. Microtubules grow by the addition of GTP-tubulin dimers to the microtubule end, where a stabilizing cap forms. Below the cap, tubulin dimers are in GDP-bound state, owing to GTPase activity of alpha-tubulin. The protein is Tubulin alpha chain of Torpedo marmorata (Marbled electric ray).